Consider the following 98-residue polypeptide: MTKSELIDRIVTHQGLLSSKDVELAIKTMLEQMSQCLATGDRIEIRGFGSFSLHYRAPRVGRNPKTGQSVSLEGKYVPHFKPGKELRDRVNEEEHVPH.

This sequence belongs to the bacterial histone-like protein family. As to quaternary structure, heterodimer of an alpha and a beta chain.

In terms of biological role, this protein is one of the two subunits of integration host factor, a specific DNA-binding protein that functions in genetic recombination as well as in transcriptional and translational control. In Pseudomonas entomophila (strain L48), this protein is Integration host factor subunit beta.